A 586-amino-acid chain; its full sequence is Proteasome-associated ATPase (586 aa).

The stretch at 11–76 forms a coiled coil; it reads AWRELEAVRA…LREEVDRLGQ (66 aa). Residue 273 to 278 coordinates ATP; sequence GCGKTL. Residues 585-586 form a docks into pockets in the proteasome alpha-ring region; that stretch reads YL.

Belongs to the AAA ATPase family. Homohexamer. Assembles into a hexameric ring structure that caps the 20S proteasome core. Strongly interacts with the prokaryotic ubiquitin-like protein Pup through a hydrophobic interface; the interacting region of ARC lies in its N-terminal coiled-coil domain. There is one Pup binding site per ARC hexamer ring. Upon ATP-binding, the C-terminus of ARC interacts with the alpha-rings of the proteasome core, possibly by binding to the intersubunit pockets.

It participates in protein degradation; proteasomal Pup-dependent pathway. Its function is as follows. ATPase which is responsible for recognizing, binding, unfolding and translocation of pupylated proteins into the bacterial 20S proteasome core particle. May be essential for opening the gate of the 20S proteasome via an interaction with its C-terminus, thereby allowing substrate entry and access to the site of proteolysis. Thus, the C-termini of the proteasomal ATPase may function like a 'key in a lock' to induce gate opening and therefore regulate proteolysis. In Nocardia farcinica (strain IFM 10152), this protein is Proteasome-associated ATPase.